The chain runs to 504 residues: Glycerol kinase (504 aa).

Residue threonine 12 participates in ADP binding. ATP is bound by residues threonine 12, threonine 13, and serine 14. Residue threonine 12 coordinates sn-glycerol 3-phosphate. Arginine 16 is an ADP binding site. Sn-glycerol 3-phosphate is bound by residues arginine 82, glutamate 83, tyrosine 134, and aspartate 244. Positions 82, 83, 134, 244, and 245 each coordinate glycerol. 2 residues coordinate ADP: threonine 266 and glycine 309. 4 residues coordinate ATP: threonine 266, glycine 309, glutamine 313, and glycine 410. The ADP site is built by glycine 410 and asparagine 414.

The protein belongs to the FGGY kinase family. Homotetramer and homodimer (in equilibrium).

It catalyses the reaction glycerol + ATP = sn-glycerol 3-phosphate + ADP + H(+). The protein operates within polyol metabolism; glycerol degradation via glycerol kinase pathway; sn-glycerol 3-phosphate from glycerol: step 1/1. With respect to regulation, activated by phosphorylation and inhibited by fructose 1,6-bisphosphate (FBP). Its function is as follows. Key enzyme in the regulation of glycerol uptake and metabolism. Catalyzes the phosphorylation of glycerol to yield sn-glycerol 3-phosphate. The protein is Glycerol kinase of Alkaliphilus oremlandii (strain OhILAs) (Clostridium oremlandii (strain OhILAs)).